We begin with the raw amino-acid sequence, 541 residues long: Major facilitator-type transporter ecdD (541 aa).

Residues 15-35 traverse the membrane as a helical segment; it reads AWPAILISGFVAFGGILFGYD. Asparagine 64 carries an N-linked (GlcNAc...) asparagine glycan. 4 helical membrane passes run 72-92, 106-126, 129-149, and 156-176; these read AIVSILSAGTFFGALGASPMG, GIFVLGVVLQTIATSIPPFLA, FFAGLGVGLISALVPLYQSET, and GFIVGAYQFAITVGLLLASVL. N-linked (GlcNAc...) asparagine glycosylation is found at asparagine 178 and asparagine 184. Residues 191–211 traverse the membrane as a helical segment; the sequence is IPIAVQFAWSIILVGGMLILP. Asparagine 253 carries an N-linked (GlcNAc...) asparagine glycan. 6 consecutive transmembrane segments (helical) span residues 277–297, 313–333, 340–360, 384–404, 418–440, and 454–474; these read LVTGCLLQALQQLSGINFIMY, VITLITNCVNVGSTLPGLYAI, PVLLTGAIGMAVSQLLVAVLG, IAFICLYIFFFAASWGPSAWV, SLSMTTATNWLLNWALSFSTPYL, and IFFIWFGCCFLCIGFVHFMIY.

It belongs to the major facilitator superfamily. Sugar transporter (TC 2.A.1.1) family.

The protein resides in the membrane. The sequence is that of Major facilitator-type transporter ecdD from Aspergillus rugulosus (Emericella rugulosa).